The primary structure comprises 763 residues: MAP7 domain-containing protein 2 (763 aa).

Over residues 1 to 11 (MERSGGNGAGA) the composition is skewed to gly residues. 3 disordered regions span residues 1–72 (MERS…REKC), 102–127 (LEEQ…LREE), and 140–531 (ERTQ…KAMI). Over residues 12–31 (RAGAPSEGAAKGSSLLSAKS) the composition is skewed to low complexity. Residues 53-72 (LKSDERQRLAKERREEREKC) show a composition bias toward basic and acidic residues. Composition is skewed to polar residues over residues 184-212 (PSDT…NLPK) and 241-251 (LKSSYKSSPTR). Over residues 312 to 321 (KRSSSPVKSK) the composition is skewed to low complexity. Composition is skewed to basic and acidic residues over residues 354–372 (ETLK…KEGA), 381–420 (PREE…EHSA), and 437–531 (LAEK…KAMI). Residues 434–575 (AKILAEKRRQ…QERLERKKRI (142 aa)) adopt a coiled-coil conformation.

The protein belongs to the MAP7 family. Interacts (via N-terminus) with microtubules; facilitates microtubule stabilization. Interacts with kinesin-1 family members, KIF5A, KIF5B and KIF5C. As to expression, detected only in the brain and testis (at the protein level).

It is found in the cytoplasm. The protein resides in the cytoskeleton. It localises to the microtubule organizing center. The protein localises to the centrosome. Its subcellular location is the cell projection. It is found in the axon. Functionally, microtubule-stabilizing protein involved in the control of cell motility and neurite outgrowth. Acts as a critical cofactor for kinesin transport; in the proximal axon regulates kinesin-1 family members, KIF5A, KIF5B and KIF5C recruitment to microtubules and contributes to kinesin-1-mediated transport in the axons. The protein is MAP7 domain-containing protein 2 (Map7d2) of Rattus norvegicus (Rat).